We begin with the raw amino-acid sequence, 356 residues long: Tyrosine recombinase XerS (356 aa).

Residues 16 to 121 enclose the Core-binding (CB) domain; sequence IMPWYVLDYY…ALSSLYKYLT (106 aa). Residues 169–354 enclose the Tyr recombinase domain; that stretch reads AFLDYVDKEY…VNDEQKTALD (186 aa). Active-site residues include R210, K234, H306, R309, and H332. Y341 (O-(3'-phospho-DNA)-tyrosine intermediate) is an active-site residue.

It belongs to the 'phage' integrase family. XerS subfamily.

It is found in the cytoplasm. Its activity is regulated as follows. FtsK is required for recombination. Its function is as follows. Site-specific tyrosine recombinase, which acts by catalyzing the cutting and rejoining of the recombining DNA molecules. Essential to convert dimers of the bacterial chromosome into monomers to permit their segregation at cell division. The sequence is that of Tyrosine recombinase XerS from Streptococcus pyogenes serotype M12 (strain MGAS9429).